The following is a 339-amino-acid chain: MDFDPTAEQQAVADVVTSVLERDISWEALVCGGVTALPVPERLGGDGVGLFEVGALLTEVGRHGAVTPALATLGLGVVPLLELASAEQQDRFLAGVAKGGVLTAALNEPGAALPDRPATSFVGGRLSGTKVGVGYAEQADWMLVTADNAVVVVSPTADGVRMVRTPTSNGSDEYVMTMDGVAVADCDILADVAAHRVNQLALAVMGAYADGLVAGALRLTADYVANRKQFGKPLSTFQTVAAQLAEVYIASRTIDLVAKSVIWRLAEDLDAGDDLGVLGYWVTSQAPPAMQICHHLHGGMGMDVTYPMHRYYSTIKDLTRLLGGPSHRLELLGARCSLT.

Arginine 227, glutamine 238, histidine 295, and glycine 299 together coordinate FAD.

It belongs to the acyl-CoA dehydrogenase family. As to quaternary structure, heterotetramer composed of FadE28 and FadE29. FAD is required as a cofactor.

It catalyses the reaction 3-oxochol-4-en-22-oyl-CoA + A = 3-oxochola-4,17-dien-22-oyl-CoA + AH2. Its pathway is steroid metabolism; cholesterol degradation. Its function is as follows. Involved in the third cycle of side chain dehydrogenation in the beta-oxidation of cholesterol catabolism. May play an important role for the initial macrophage invasion, possibly in response to the acidification of phagosome. It contributes partly to the virulence by increasing the efficiency of beta-oxidation. Catalyzes the dehydrogenation of 2'-propanoyl-CoA ester side chains of 3-oxo-4-pregnene-20-carboxyl-CoA (3-OPC-CoA) to yield 3-oxo-4,17-pregnadiene-20-carboxyl-CoA (3-OPDC-CoA). Also able to dehydrogenate steroyl-CoA such as 3-oxo-chol-4-en-24-oyl-CoA (3-OCO-CoA), 1beta-(2'-propanoyl-CoA)-3a-alpha-H-7a-beta-methylhexahydro-4-indanone (indanone-CoA ester), hexahydroindanone and pregenenone. The protein is Acyl-CoA dehydrogenase FadE28 (fadE28) of Mycobacterium tuberculosis (strain ATCC 25618 / H37Rv).